We begin with the raw amino-acid sequence, 185 residues long: Ribosome-recycling factor (185 aa).

Belongs to the RRF family.

Its subcellular location is the cytoplasm. Responsible for the release of ribosomes from messenger RNA at the termination of protein biosynthesis. May increase the efficiency of translation by recycling ribosomes from one round of translation to another. This chain is Ribosome-recycling factor, found in Clostridioides difficile (strain 630) (Peptoclostridium difficile).